We begin with the raw amino-acid sequence, 40 residues long: Esterase-4 (40 aa).

It belongs to the type-B carboxylesterase/lipase family.

The catalysed reaction is a carboxylic ester + H2O = an alcohol + a carboxylate + H(+). This Drosophila mojavensis (Fruit fly) protein is Esterase-4 (Est-4).